Consider the following 411-residue polypeptide: F-box protein At4g19940 (411 aa).

One can recognise an F-box domain in the interval 29–75; the sequence is RQPIPEIPFDLVIEILTRLPAKSLMRFKSVSKLWSSLICSRNFTNRL.

In Arabidopsis thaliana (Mouse-ear cress), this protein is F-box protein At4g19940.